The sequence spans 204 residues: NADH-quinone oxidoreductase subunit C (204 aa).

Belongs to the complex I 30 kDa subunit family. NDH-1 is composed of 14 different subunits. Subunits NuoB, C, D, E, F, and G constitute the peripheral sector of the complex.

The protein localises to the cell inner membrane. The catalysed reaction is a quinone + NADH + 5 H(+)(in) = a quinol + NAD(+) + 4 H(+)(out). Functionally, NDH-1 shuttles electrons from NADH, via FMN and iron-sulfur (Fe-S) centers, to quinones in the respiratory chain. The immediate electron acceptor for the enzyme in this species is believed to be ubiquinone. Couples the redox reaction to proton translocation (for every two electrons transferred, four hydrogen ions are translocated across the cytoplasmic membrane), and thus conserves the redox energy in a proton gradient. In Vesicomyosocius okutanii subsp. Calyptogena okutanii (strain HA), this protein is NADH-quinone oxidoreductase subunit C.